The sequence spans 72 residues: Disintegrin sasaimin (72 aa).

Residues 1 to 72 (EAGEECDCGA…SAGCPRNPFH (72 aa)) enclose the Disintegrin domain. 6 disulfide bridges follow: Cys-6–Cys-21, Cys-8–Cys-16, Cys-15–Cys-38, Cys-29–Cys-35, Cys-34–Cys-59, and Cys-47–Cys-66. The short motif at 51–53 (RGD) is the Cell attachment site element.

It belongs to the venom metalloproteinase (M12B) family. P-II subfamily. P-IIa sub-subfamily. In terms of assembly, monomer. In terms of tissue distribution, expressed by the venom gland.

The protein resides in the secreted. Its function is as follows. Inhibits ADP- (IC(50)=66 nM) and collagen-induced (IC(50)=100 nM) aggregation of human platelets. In vitro, inhibits adhesion of endothelial cells to vitronectin, type-I collagen and, to a lower degree, fibronectin and laminin. The sequence is that of Disintegrin sasaimin from Cerrophidion sasai (Costa Rica montane pitviper).